The primary structure comprises 98 residues: Elicitin Vex1 (98 aa).

3 cysteine pairs are disulfide-bonded: Cys-3-Cys-71, Cys-27-Cys-56, and Cys-51-Cys-95. Asn-92 carries an N-linked (GlcNAc...) asparagine glycan.

It belongs to the elicitin family.

Its subcellular location is the secreted. Induces local and distal defense responses (incompatible hypersensitive reaction) in plants from the solanaceae and cruciferae families. Elicits leaf necrosis and causes the accumulation of pathogenesis-related proteins. Might interact with the lipidic molecules of the plasma membrane. The sequence is that of Elicitin Vex1 from Phytopythium vexans (Damping-off fungus).